Reading from the N-terminus, the 79-residue chain is Small ribosomal subunit protein bS21 (79 aa).

The segment at 58–79 is disordered; that stretch reads ARKKMQREGLLPMKPKPMPGMR.

The protein belongs to the bacterial ribosomal protein bS21 family.

This chain is Small ribosomal subunit protein bS21, found in Beijerinckia indica subsp. indica (strain ATCC 9039 / DSM 1715 / NCIMB 8712).